Reading from the N-terminus, the 962-residue chain is Spliceosome associated factor 3, U4/U6 recycling protein (962 aa).

Low complexity predominate over residues 1 to 21; it reads MATTAASSASEPEVEPQAGPE. The interval 1–92 is disordered; sequence MATTAASSAS…EDEWEYDEEE (92 aa). At A2 the chain carries N-acetylalanine. The mediates interaction with PRPF3 stretch occupies residues 2-352; that stretch reads ATTAASSASE…LVPDLWIRYS (351 aa). S10 is subject to Phosphoserine. Residues 81–92 are compositionally biased toward acidic residues; it reads AGEDEWEYDEEE. HAT repeat units lie at residues 127 to 159, 165 to 196, 202 to 238, 243 to 276, 325 to 357, 360 to 392, 395 to 431, 441 to 474, and 488 to 521; these read GELS…DEIS, LDRE…YSVG, GGLE…FESA, ARLE…WSEE, GDPA…YLDR, KVKD…AMER, LDHQ…YLRR, KELE…PSCL, and NNMQ…LERA. At S216 the chain carries Phosphoserine. Residues 488–521 form a required for interaction with USP4 region; it reads NNMQKARELWDSIMTRGNAKYANMWLEYYNLERA. A necessary and sufficient for U6 snRNA binding region spans residues 538–952; sequence CTSDYPEHVC…VATEAPKMSN (415 aa). Positions 559-618 form a coiled coil; it reads TLEDWDLAIQKTETRLARVNEQRMKAAEKEAALVQQEEEKAEQRKKVRAEKKALKKKKKT. Residues 591 to 602 are compositionally biased toward basic and acidic residues; the sequence is LVQQEEEKAEQR. Residues 591-696 are disordered; the sequence is LVQQEEEKAE…SLKRDMPKVA (106 aa). Residues 601 to 670 are required for nuclear localization; the sequence is QRKKVRAEKK…KEETELSGKC (70 aa). The Nuclear localization signal motif lies at 602 to 609; it reads RKKVRAEK. The segment covering 603–618 has biased composition (basic residues); sequence KKVRAEKKALKKKKKT. Residues 627–640 are compositionally biased toward acidic residues; it reads DEDEENEWGEEEEE. The residue at position 651 (S651) is a Phosphoserine. Over residues 680–696 the composition is skewed to basic and acidic residues; that stretch reads KQKEKAASLKRDMPKVA. Residues 704–782 enclose the RRM 1 domain; the sequence is VTVFVSNLPY…RPMFVSPCVD (79 aa). Phosphoserine occurs at positions 795 and 852. An RRM 2 domain is found at 801–878; the sequence is HKLFISGLPF…NVIKVAISNP (78 aa). The disordered stretch occupies residues 880–962; that stretch reads QRKVPEKPEV…ADFAKLLLRK (83 aa). R906 carries the post-translational modification Omega-N-methylarginine.

As to quaternary structure, component of the 7SK snRNP complex at least composed of P-TEFb (composed of CDK9 and CCNT1/cyclin-T1), HEXIM1, HEXIM2, BCDIN3, SART3 proteins and 7SK and U6 snRNAs. Interacts with AGO1 and AGO2. Interacts with PRPF3 and USP4; the interaction with PRPF3 is direct and recruits USP4 to its substrate PRPF3. Interacts with USP15; the interaction is direct. In terms of tissue distribution, ubiquitously expressed, with low level of expression in liver, heart and skeletal. Also detected in hematopoietic cells (at protein level).

It localises to the nucleus. It is found in the nucleoplasm. The protein localises to the cajal body. The protein resides in the nucleus speckle. Its subcellular location is the cytoplasm. U6 snRNP-binding protein that functions as a recycling factor of the splicing machinery. Promotes the initial reassembly of U4 and U6 snRNPs following their ejection from the spliceosome during its maturation. Also binds U6atac snRNPs and may function as a recycling factor for U4atac/U6atac spliceosomal snRNP, an initial step in the assembly of U12-type spliceosomal complex. The U12-type spliceosomal complex plays a role in the splicing of introns with non-canonical splice sites. May also function as a substrate-targeting factor for deubiquitinases like USP4 and USP15. Recruits USP4 to ubiquitinated PRPF3 within the U4/U5/U6 tri-snRNP complex, promoting PRPF3 deubiquitination and thereby regulating the spliceosome U4/U5/U6 tri-snRNP spliceosomal complex disassembly. May also recruit the deubiquitinase USP15 to histone H2B and mediate histone deubiquitination, thereby regulating gene expression and/or DNA repair. May play a role in hematopoiesis probably through transcription regulation of specific genes including MYC. This chain is Spliceosome associated factor 3, U4/U6 recycling protein, found in Mus musculus (Mouse).